Reading from the N-terminus, the 832-residue chain is Cadherin-17 (832 aa).

Positions 1–22 are cleaved as a signal peptide; it reads MILQAHLHSLCLLMLYLATGYG. Residues 23–787 are Extracellular-facing; that stretch reads QEGKFSGPLK…HQTGIPTVGM (765 aa). Cadherin domains lie at 30–128, 129–244, 245–340, 341–449, 450–566, 567–667, and 668–777; these read PLKP…TFLQ, SKYE…APKP, VEMV…PPTC, PSPV…IPIF, EKSD…APQF, SQHV…PPRL, and AKDY…RPAG. 8 N-linked (GlcNAc...) asparagine glycosylation sites follow: asparagine 149, asparagine 184, asparagine 250, asparagine 419, asparagine 456, asparagine 546, asparagine 587, and asparagine 722. The chain crosses the membrane as a helical span at residues 788–808; it reads AVGILLTTLLVIGIILAVVFI. Residues 809–832 are Cytoplasmic-facing; sequence RIKKDKGKDNVESAQASEVKPLRS.

As to expression, expressed in the gastrointestinal tract and pancreatic duct. Not detected in kidney, lung, liver, brain, adrenal gland and skin.

It is found in the cell membrane. Functionally, cadherins are calcium-dependent cell adhesion proteins. They preferentially interact with themselves in a homophilic manner in connecting cells; cadherins may thus contribute to the sorting of heterogeneous cell types. LI-cadherin may have a role in the morphological organization of liver and intestine. Involved in intestinal peptide transport. This Homo sapiens (Human) protein is Cadherin-17 (CDH17).